Reading from the N-terminus, the 389-residue chain is Alanine racemase TOXG (389 aa).

Lys235 is modified (N6-(pyridoxal phosphate)lysine).

It belongs to the threonine aldolase family. The cofactor is pyridoxal 5'-phosphate.

The catalysed reaction is L-alanine = D-alanine. It participates in mycotoxin biosynthesis; HC-toxin biosynthesis. In terms of biological role, alanine racemase, part of the diffuse TOX2 gene cluster that mediates the biosynthesis of the HC-toxin, cyclic tetrapeptide of structure cyclo(D-Pro-L-Ala-D-Ala-L-Aeo), where Aeo stands for 2-amino-9,10-epoxi-8-oxodecanoic acid. HC-toxin is a determinant of specificity and virulence in the interaction between the producing fungus and its host, maize. TOXG catalyzes the conversion of L-alanine into D-alanine, an essential precursor for the production of the major forms of HC-toxin by the non-ribosomal peptide synthetase HTS1. The chain is Alanine racemase TOXG from Cochliobolus carbonum (Maize leaf spot fungus).